The primary structure comprises 157 residues: 3-hydroxyacyl-[acyl-carrier-protein] dehydratase FabZ (157 aa).

Histidine 58 is a catalytic residue.

Belongs to the thioester dehydratase family. FabZ subfamily.

The protein localises to the cytoplasm. The catalysed reaction is a (3R)-hydroxyacyl-[ACP] = a (2E)-enoyl-[ACP] + H2O. Involved in unsaturated fatty acids biosynthesis. Catalyzes the dehydration of short chain beta-hydroxyacyl-ACPs and long chain saturated and unsaturated beta-hydroxyacyl-ACPs. The sequence is that of 3-hydroxyacyl-[acyl-carrier-protein] dehydratase FabZ from Rhizorhabdus wittichii (strain DSM 6014 / CCUG 31198 / JCM 15750 / NBRC 105917 / EY 4224 / RW1) (Sphingomonas wittichii).